Reading from the N-terminus, the 446-residue chain is Transcription factor Dp-2 (446 aa).

The residue at position 2 (threonine 2) is an N-acetylthreonine. Residues serine 24 and serine 42 each carry the phosphoserine; by CDK2 modification. Positions 60 to 82 (PQMIISTPQRIANSGSVLIGNPY) are interaction with CEBPA. The Nuclear localization signal signature appears at 103–118 (SDRKRAREFIDSDFSE). Serine 122 is subject to Phosphoserine. Residues 129–210 (GKGLRHFSMK…PTGKKRNQVD (82 aa)) mediate DNA binding. The DEF box motif lies at 176–210 (DQENIRRRVYDALNVLMAMNIISSLPTGKKRNQVD). The segment at 219-292 (NLEIEKQRRI…RKTVIDCSIS (74 aa)) is dimerization. The tract at residues 229–261 (ERIKQKRAQLQELLLQQIAFKNLVQRNRQNEQQ) is DCB1. The tract at residues 274 to 330 (LPFIIINTSRKTVIDCSISSDKFEYLFNFDNTFEIHDDIEVLKRMGMSFGLESGKCS) is DCB2. Residues 404–446 (LPASNSHQSSSAASHFSESRGETPCSFNDEDEEDEEEDPSSPE) form a disordered region. Low complexity predominate over residues 406–419 (ASNSHQSSSAASHF). Residues 431–446 (NDEDEEDEEEDPSSPE) are compositionally biased toward acidic residues.

It belongs to the E2F/DP family. As to quaternary structure, component of the DRTF1/E2F transcription factor complex. Forms heterodimers with E2F family members. The complex can interact with hypophosphorylated retinoblastoma protein RB1 and related proteins (RBL1 and RBL2) that inhibit the E2F transactivation domain. During the cell cycle, RB becomes phosphorylated in mid-to-late G1 phase, detaches from the DRTF1/E2F complex rendering E2F transcriptionally active. Interacts with GMCL. Component of the DREAM complex (also named LINC complex) at least composed of E2F4, E2F5, LIN9, LIN37, LIN52, LIN54, MYBL1, MYBL2, RBL1, RBL2, RBBP4, TFDP1 and TFDP2. The complex exists in quiescent cells where it represses cell cycle-dependent genes. It dissociates in S phase when LIN9, LIN37, LIN52 and LIN54 form a subcomplex that binds to MYBL2. The complex TFDP2:E2F1 interacts with CEBPA; the interaction prevents CEBPA binding to target gene promoters and represses its transcriptional activity. In terms of processing, phosphorylation by E2F1-bound cyclin A-CDK2, in the S phase, inhibits E2F-mediated DNA binding and transactivation. In terms of tissue distribution, expressed in all tissues examined. Highest levels in spleen and heart.

It is found in the nucleus. Functionally, can stimulate E2F-dependent transcription. Binds DNA cooperatively with E2F family members through the E2 recognition site, 5'-TTTC[CG]CGC-3', found in the promoter region of a number of genes whose products are involved in cell cycle regulation or in DNA replication. The TFDP2:E2F complex functions in the control of cell-cycle progression from G1 to S phase. The E2F1:DP complex appears to mediate both cell proliferation and apoptosis. Blocks adipocyte differentiation by repressing CEBPA binding to its target gene promoters. The polypeptide is Transcription factor Dp-2 (Tfdp2) (Mus musculus (Mouse)).